Here is a 589-residue protein sequence, read N- to C-terminus: Deoxynucleoside triphosphate triphosphohydrolase SAMHD1 (589 aa).

M1 carries the N-acetylmethionine modification. Residues 1-10 (MQSADSQNTP) show a composition bias toward polar residues. Positions 1-41 (MQSADSQNTPKRPRRDGSPRTPPDSPLADAETSPSHDLDPD) are disordered. S18 carries the post-translational modification Phosphoserine. T21 carries the post-translational modification Phosphothreonine. 2 positions are modified to phosphoserine: S33 and S88. The SAM domain maps to 45–100 (WGPEQVWSFLRRCGFSDSELLKRCREKRMSGSLLPFPEDLGISSHGKKMKLLNCIQ). 2 residues coordinate GTP: K104 and V105. DGTP is bound at residue N107. Residues D125, Q130, and R133 each coordinate GTP. DGTP is bound by residues Q137, L138, V144, and R152. Q137 contacts dATP. Q137 contributes to the dCTP binding site. Position 137 (Q137) interacts with dTTP. DATP is bound at residue R152. R152 is a binding site for dCTP. A dTTP-binding site is contributed by R152. Residues 152 to 277 (RFEHSLGVGY…IKDASKWLYK (126 aa)) enclose the HD domain. Residues H155, H194, and D195 each contribute to the Mn(2+) site. DATP contacts are provided by H198 and H203. DCTP is bound by residues H198 and H203. The dTTP site is built by H198 and H203. H221 is an active-site residue. D300 contributes to the Mn(2+) binding site. K301, Y304, D308, R322, R341, K343, N347, R355, Y363, Q364, H365, and K366 together coordinate dGTP. DATP-binding residues include K301, Y304, and D308. Positions 301, 304, and 308 each coordinate dCTP. DTTP contacts are provided by K301, Y304, and D308. DATP is bound at residue R355. R355 is a binding site for dCTP. Q364 is a binding site for dATP. Q364 contributes to the dCTP binding site. Q364 contributes to the dTTP binding site. R440 and K444 together coordinate GTP. A Glycyl lysine isopeptide (Lys-Gly) (interchain with G-Cter in SUMO2) cross-link involves residue K457. K512 lines the GTP pocket. K512 is a binding site for dGTP.

The protein belongs to the SAMHD1 family. In terms of assembly, homodimer; in absence of GTP and dNTP. Homotetramer; in GTP- and dNTP-bound form. Interacts with MRE11; leading to stimulate the exonuclease activity of MRE11. Interacts with RBBP8/CtIP. Interacts (via its C-terminus) with CD81. The cofactor is Zn(2+).

The protein localises to the nucleus. Its subcellular location is the chromosome. It catalyses the reaction a 2'-deoxyribonucleoside 5'-triphosphate + H2O = a 2'-deoxyribonucleoside + triphosphate + H(+). The enzyme catalyses dATP + H2O = 2'-deoxyadenosine + triphosphate + H(+). The catalysed reaction is dCTP + H2O = 2'-deoxycytidine + triphosphate + H(+). It carries out the reaction dGTP + H2O = 2'-deoxyguanosine + triphosphate + H(+). It catalyses the reaction dTTP + H2O = thymidine + triphosphate + H(+). With respect to regulation, allosterically activated and regulated via the combined actions of GTP and dNTPs (dATP, dGTP, dTTP and dCTP): Allosteric site 1 binds GTP, while allosteric site 2 binds dNTP. Allosteric activation promotes the formation of highly active homotetramers. Functionally, protein that acts both as a host restriction factor involved in defense response to virus and as a regulator of DNA end resection at stalled replication forks. Has deoxynucleoside triphosphate (dNTPase) activity, which is required to restrict infection by viruses: dNTPase activity reduces cellular dNTP levels to levels too low for retroviral reverse transcription to occur, blocking early-stage virus replication in dendritic and other myeloid cells. Likewise, suppresses LINE-1 retrotransposon activity. In addition to virus restriction, dNTPase activity acts as a regulator of DNA precursor pools by regulating dNTP pools. Functions during S phase at stalled DNA replication forks to promote the resection of gapped or reversed forks: acts by stimulating the exonuclease activity of MRE11, activating the ATR-CHK1 pathway and allowing the forks to restart replication. Its ability to promote degradation of nascent DNA at stalled replication forks is required to prevent induction of type I interferons, thereby preventing chronic inflammation. Ability to promote DNA end resection at stalled replication forks is independent of dNTPase activity. Enhances immunoglobulin hypermutation in B-lymphocytes by promoting transversion mutation. The protein is Deoxynucleoside triphosphate triphosphohydrolase SAMHD1 of Bos taurus (Bovine).